A 138-amino-acid polypeptide reads, in one-letter code: Ribosomal RNA large subunit methyltransferase H (138 aa).

Residues Leu57, Gly86, and 105–110 contribute to the S-adenosyl-L-methionine site; that span reads LSPLTF.

This sequence belongs to the RNA methyltransferase RlmH family. As to quaternary structure, homodimer.

The protein resides in the cytoplasm. It carries out the reaction pseudouridine(1915) in 23S rRNA + S-adenosyl-L-methionine = N(3)-methylpseudouridine(1915) in 23S rRNA + S-adenosyl-L-homocysteine + H(+). Functionally, specifically methylates the pseudouridine at position 1915 (m3Psi1915) in 23S rRNA. The polypeptide is Ribosomal RNA large subunit methyltransferase H (Prochlorococcus marinus (strain MIT 9301)).